The following is a 1407-amino-acid chain: MKDLLKFLKAQTKTEEFDAIKIALASPDMIRSWSFGEVKKPETINYRTFKPERDGLFCARIFGPVKDYECLCGKYKRLKHRGVICEKCGVEVTQTKVRRERMGHIELASPTAHIWFLKSLPSRIGLLLDMPLRDIERVLYFESYVVVEGGMTNLERRQILTEEQYLDALEEFGDEFDAKMGAEAIQALLKNMDLEQECEQLREELTETNSETKRKKLTKRIKLLEAFVQSGNKPEWMILTVLPVLPPDLRPLVPLDGGRFATSDLNDLYRRVINRNNRLKRLLDLAAPDIIVRNEKRMLQEAVDALLDNGRRGRAITGSNKRPLKSLADMIKGKQGRFRQNLLGKRVDYSGRSVITVGPYLRLHQCGLPKKMALELFKPFIYGKLELRGLATTIKAAKKMVEREEAVVWDILDEVIREHPVLLNRAPTLHRLGIQAFEPVLIEGKAIQLHPLVCAAYNADFDGDQMAVHVPLTLEAQLEARALMMSTNNILSPANGEPIIVPSQDVVLGLYYMTRDCVNAKGEGMVLTGPKEAERVYRAGLASLHARVKVRITEEIKSIEGDVTHQTSIIDTTIGRAILWMIVPKGLPFSIVNQPLGKKAISKMLNTCYRILGLKPTVIFADQTMYTGFAYAARSGASVGIDDMVIPAKKAEIIEEAETEVAEIQEQFQSGLVTAGERYNKVIDIWAAANERVAKAMMENLSVEDVVNRDGVVEQQVSFNSIFMMADSGARGSAAQIRQLAGMRGLMAKPDGSIIETPITANFREGLNVLQYFISTHGARKGLADTALKTANSGYLTRRLVDVAQDLVVTEDDCGTHEGIMMTPVIEGGDVKEPLRERVLGRVTAEDVIKPGTADILVPRNTLLNEQWCDMLEENSVDVVKVRSVVSCQTDFGVCANCYGRDLARGHIINKGEAIGVIAAQSIGEPGTQLTMRTFHIGGAASRAAAESSIQVKNKGSLKLNNVKFVMNGNGKLVITSRNTELKLIDEFGRTKESYKVPYGAVMAKGDGSDVSGGETVANWDPHTMPVVTEVSGFIRFADMIDGQTITRQTDDLTGLSSIVVLDSAERTGSGKDLRPALKIVDAKGQDVLIPGTDMPAQYFLPGKTIVQLEDGVQIGAGDTLARLPQESSGTKDITGGLPRVADLFEARRPKEPAILAEISGIISFGKETKGKRRLVISPLDGSDAYEEMIPKWRQLNVFEGEVVERGDVVSDGPESPHDILRLRGVHAVTRYITNEVQEVYRLQGVKINDKHIEVIVRQMLRKGTIVSAGSTEFLEGEQAEMSRIKIANRKLEADGKITATFSRDLLGITKASLATESFISAASFQETTRVLTEAAVAGKRDELRGLKENVIVGRLIPAGTGYAYHQDRMRRRQASEAPVVPQVSADEASANMAELLNAGFGKRDDE.

Positions 70, 72, 85, and 88 each coordinate Zn(2+). Positions 460, 462, and 464 each coordinate Mg(2+). Zn(2+)-binding residues include C814, C888, C895, and C898.

Belongs to the RNA polymerase beta' chain family. The RNAP catalytic core consists of 2 alpha, 1 beta, 1 beta' and 1 omega subunit. When a sigma factor is associated with the core the holoenzyme is formed, which can initiate transcription. Mg(2+) is required as a cofactor. The cofactor is Zn(2+).

It carries out the reaction RNA(n) + a ribonucleoside 5'-triphosphate = RNA(n+1) + diphosphate. DNA-dependent RNA polymerase catalyzes the transcription of DNA into RNA using the four ribonucleoside triphosphates as substrates. This chain is DNA-directed RNA polymerase subunit beta', found in Pectobacterium atrosepticum (strain SCRI 1043 / ATCC BAA-672) (Erwinia carotovora subsp. atroseptica).